The sequence spans 339 residues: Sulfate/thiosulfate import ATP-binding protein CysA (339 aa).

In terms of domain architecture, ABC transporter spans 3–237 (IAIRSVEKQF…PETAFVCGFV (235 aa)). 35–42 (GPSGSGKT) contributes to the ATP binding site.

It belongs to the ABC transporter superfamily. Sulfate/tungstate importer (TC 3.A.1.6) family. The complex is composed of two ATP-binding proteins (CysA), two transmembrane proteins (CysT and CysW) and a solute-binding protein (CysP).

It is found in the cell inner membrane. It carries out the reaction sulfate(out) + ATP + H2O = sulfate(in) + ADP + phosphate + H(+). The catalysed reaction is thiosulfate(out) + ATP + H2O = thiosulfate(in) + ADP + phosphate + H(+). Part of the ABC transporter complex CysAWTP involved in sulfate/thiosulfate import. Responsible for energy coupling to the transport system. This is Sulfate/thiosulfate import ATP-binding protein CysA from Caulobacter vibrioides (strain ATCC 19089 / CIP 103742 / CB 15) (Caulobacter crescentus).